Reading from the N-terminus, the 306-residue chain is MASAGAKRQPEAQNGAAVGLAQVAEIPECPGTEECLVPAHETCSTPGEDRCPVGHSLEPELQEEGINLGEEGLNPGVEAGEERGPKPTSSIVRPAHGPKRKAEAELPPGLLLQKEEPEGSHSESSLSSKQHKKAKKRKSVGAPVPPAVASASAPTETLGLEPFAVPWVLAGKAQRLRPLYQYINYCNPELNQAGDGDREPEAEPESELALAPEEAGVEQLQLQTLLPMAGELGLGLALPCPNPLAPLTHNLPPLVEEVGEEPGGLSSLRVSGSLKAEVDKTTQVDIDKMLSVCAAPLVPPLSPQYK.

The disordered stretch occupies residues 40–156 (HETCSTPGED…AVASASAPTE (117 aa)). Low complexity predominate over residues 64–73 (EGINLGEEGL). The span at 129 to 139 (KQHKKAKKRKS) shows a compositional bias: basic residues.

This is an uncharacterized protein from Rattus norvegicus (Rat).